The primary structure comprises 284 residues: L-fucose dehydrogenase (284 aa).

Residues Arg19, Ile21, Asp40, Lys41, Asp62, Val63, Asn89, Tyr154, Lys158, Ile187, Thr189, and Leu191 each coordinate NAD(+).

Belongs to the short-chain dehydrogenases/reductases (SDR) family.

The catalysed reaction is L-fucose + NAD(+) = L-fucono-1,5-lactone + NADH + H(+). It catalyses the reaction D-arabinose + NAD(+) = D-arabinono-1,5-lactone + NADH + H(+). It carries out the reaction L-galactose + NAD(+) = L-galactono-1,5-lactone + NADH + H(+). It functions in the pathway carbohydrate degradation; L-fucose degradation. In terms of biological role, catalyzes the NAD(+)-dependent oxidation of L-fucose, yielding L-fucono-1,5-lactone, which rapidly converts spontaneously to L-fucone-1,4-lactone. Can also act on D-arabinose and L-galactose, with lower catalytic efficiency. Does not use NADPH. May be the initial enzyme of the putative L-fucose degradation pathway in mammals. This Oryctolagus cuniculus (Rabbit) protein is L-fucose dehydrogenase (HSD17B14).